The following is a 519-amino-acid chain: Acetylcholine receptor subunit gamma (519 aa).

The signal sequence occupies residues 1 to 22 (MCGGQRPLFLLPLLAVCLGAKG). Over 23 to 240 (RNQEERLLGD…VVFYLLIQRK (218 aa)) the chain is Extracellular. Residues N52 and N163 are each glycosylated (N-linked (GlcNAc...) asparagine). C150 and C164 form a disulfide bridge. Transmembrane regions (helical) follow at residues 241–265 (PLFY…IYFL), 274–292 (CTVA…FLVA), and 308–329 (YLTF…VLNV). The Cytoplasmic segment spans residues 330 to 476 (SLRSPHTHSM…WFLVGRVLDR (147 aa)). Residues 477–497 (VCFLAMLSLFVCGTAGIFLMA) form a helical membrane-spanning segment.

The protein belongs to the ligand-gated ion channel (TC 1.A.9) family. Acetylcholine receptor (TC 1.A.9.1) subfamily. Gamma/CHRNG sub-subfamily. In terms of assembly, pentamer of two alpha chains, and one each of the beta, delta, and gamma (in immature muscle) or epsilon (in mature muscle) chains.

Its subcellular location is the postsynaptic cell membrane. The protein resides in the cell membrane. The enzyme catalyses K(+)(in) = K(+)(out). The catalysed reaction is Na(+)(in) = Na(+)(out). After binding acetylcholine, the AChR responds by an extensive change in conformation that affects all subunits and leads to opening of an ion-conducting channel across the plasma membrane. The polypeptide is Acetylcholine receptor subunit gamma (CHRNG) (Bos taurus (Bovine)).